The primary structure comprises 228 residues: uncharacterized protein (228 aa).

S-adenosyl-L-methionine is bound by residues 77-79 (TTA), glycine 113, valine 133, and 140-142 (PSL).

Belongs to the class IV-like SAM-binding methyltransferase superfamily. RNA methyltransferase TrmH family.

This is an uncharacterized protein from Escherichia coli (strain K12).